A 180-amino-acid chain; its full sequence is D(1A) dopamine receptor (180 aa).

A helical membrane pass occupies residues 1 to 10; the sequence is NTLLVCAAVI. Residues 11 to 21 are Cytoplasmic-facing; it reads RFRHLRSKVTN. A helical membrane pass occupies residues 22-48; the sequence is FFVISLAVSDLLVAVLVMPWKAVAEIA. Residues 49–57 lie on the Extracellular side of the membrane; it reads GFWPFGSFC. Cysteine 57 and cysteine 147 are disulfide-bonded. Residues 58–80 traverse the membrane as a helical segment; sequence NIWVAFDIMCSTASILNLCVISV. Over 81 to 99 the chain is Cytoplasmic; that stretch reads DRYWAISSPFRYERKMTPK. The helical transmembrane segment at 100 to 124 threads the bilayer; the sequence is AAFILIGVAWTLSVLISFIPVQLSW. The Extracellular portion of the chain corresponds to 125 to 153; the sequence is HKAKPTSPPDGNATSLDETVDNCDSSLSR. N-linked (GlcNAc...) asparagine glycosylation is present at asparagine 136. The chain crosses the membrane as a helical span at residues 154–179; the sequence is TYSISSSLVNFYNPVAIMXVTYTRIH. Residue arginine 180 is a topological domain, cytoplasmic.

This sequence belongs to the G-protein coupled receptor 1 family. Interacts with DNAJC14 via its C-terminus. Interacts with DRD2. Interacts with DORIP1.

It is found in the cell membrane. The protein resides in the endoplasmic reticulum membrane. It localises to the cell projection. Its subcellular location is the cilium membrane. Its function is as follows. Dopamine receptor whose activity is mediated by G proteins which activate adenylyl cyclase. The sequence is that of D(1A) dopamine receptor (DRD1) from Oryctolagus cuniculus (Rabbit).